A 235-amino-acid polypeptide reads, in one-letter code: Claudin-16 (235 aa).

The Cytoplasmic segment spans residues 1-3 (MRD). Residues 4–24 (LLQYIACFFAFFSAGFLIVAT) traverse the membrane as a helical segment. At 25-79 (WTDCWMVNADDSLEVSTKCRGLWWECVTNAFDGIRTCDEYDSILAEHPLKLVVTR) the chain is on the extracellular side. A helical transmembrane segment spans residues 80-100 (ALMITADILAGFGFLTLLLGL). Over 101–115 (DCVKFLPDEPYIKVR) the chain is Cytoplasmic. A helical membrane pass occupies residues 116-136 (ICFVAGATLLIAGTPGIIGSV). Topologically, residues 137 to 169 (WYAVDVYVERSTLVLHNIFLGIQYKFGWSCWLG) are extracellular. The chain crosses the membrane as a helical span at residues 170-190 (MAGSLGCFLAGAVLTCCLYLF). Residues 191–235 (KDVGPERNYPYSLRKAYSAAGVSMAKSYSAPRTETAKMYAVDTRV) are Cytoplasmic-facing. An Interaction with TJP1 motif is present at residues 233 to 235 (TRV).

Belongs to the claudin family. In terms of assembly, can form heteropolymeric tight junction strands with other claudins. Interacts with CLDN19. Interacts (via PDZ-binding motif TRV) with TJP1 (via PDZ domain). Cannot form tight junction strands on its own. In terms of tissue distribution, kidney-specific, including the thick ascending limb of Henle (TAL).

Its subcellular location is the cell junction. It localises to the tight junction. It is found in the cell membrane. It carries out the reaction Mg(2+)(in) = Mg(2+)(out). It catalyses the reaction Ca(2+)(in) = Ca(2+)(out). The catalysed reaction is Na(+)(in) = Na(+)(out). The enzyme catalyses K(+)(in) = K(+)(out). It carries out the reaction Rb(+)(in) = Rb(+)(out). It catalyses the reaction Cs(+)(in) = Cs(+)(out). The catalysed reaction is Li(+)(in) = Li(+)(out). Its function is as follows. Forms paracellular channels: coassembles with CLDN19 into tight junction strands with cation-selective channels through the strands, conveying epithelial permeability in a process known as paracellular tight junction permeability. Involved in the maintenance of ion gradients along the nephron. In the thick ascending limb (TAL) of Henle's loop, facilitates sodium paracellular permeability from the interstitial compartment to the lumen, contributing to the lumen-positive transepithelial potential that drives paracellular magnesium and calcium reabsorption. In Homo sapiens (Human), this protein is Claudin-16.